The following is a 185-amino-acid chain: Hypoxanthine/guanine phosphoribosyltransferase (185 aa).

Belongs to the purine/pyrimidine phosphoribosyltransferase family. Archaeal HPRT subfamily. Homodimer.

Its subcellular location is the cytoplasm. The catalysed reaction is IMP + diphosphate = hypoxanthine + 5-phospho-alpha-D-ribose 1-diphosphate. It catalyses the reaction GMP + diphosphate = guanine + 5-phospho-alpha-D-ribose 1-diphosphate. Its pathway is purine metabolism; IMP biosynthesis via salvage pathway; IMP from hypoxanthine: step 1/1. Its function is as follows. Catalyzes a salvage reaction resulting in the formation of IMP that is energically less costly than de novo synthesis. This chain is Hypoxanthine/guanine phosphoribosyltransferase, found in Methanococcus maripaludis (strain C5 / ATCC BAA-1333).